Here is a 133-residue protein sequence, read N- to C-terminus: S-adenosylmethionine decarboxylase proenzyme (133 aa).

Catalysis depends on Ser64, which acts as the Schiff-base intermediate with substrate; via pyruvic acid. At Ser64 the chain carries Pyruvic acid (Ser); by autocatalysis. His69 acts as the Proton acceptor; for processing activity in catalysis. The active-site Proton donor; for catalytic activity is Cys84.

This sequence belongs to the prokaryotic AdoMetDC family. Type 1 subfamily. Heterotetramer of two alpha and two beta chains arranged as a dimer of alpha/beta heterodimers. Requires pyruvate as cofactor. Post-translationally, is synthesized initially as an inactive proenzyme. Formation of the active enzyme involves a self-maturation process in which the active site pyruvoyl group is generated from an internal serine residue via an autocatalytic post-translational modification. Two non-identical subunits are generated from the proenzyme in this reaction, and the pyruvate is formed at the N-terminus of the alpha chain, which is derived from the carboxyl end of the proenzyme. The post-translation cleavage follows an unusual pathway, termed non-hydrolytic serinolysis, in which the side chain hydroxyl group of the serine supplies its oxygen atom to form the C-terminus of the beta chain, while the remainder of the serine residue undergoes an oxidative deamination to produce ammonia and the pyruvoyl group blocking the N-terminus of the alpha chain.

It catalyses the reaction S-adenosyl-L-methionine + H(+) = S-adenosyl 3-(methylsulfanyl)propylamine + CO2. It participates in amine and polyamine biosynthesis; S-adenosylmethioninamine biosynthesis; S-adenosylmethioninamine from S-adenosyl-L-methionine: step 1/1. Its function is as follows. Catalyzes the decarboxylation of S-adenosylmethionine to S-adenosylmethioninamine (dcAdoMet), the propylamine donor required for the synthesis of the polyamines spermine and spermidine from the diamine putrescine. The polypeptide is S-adenosylmethionine decarboxylase proenzyme (Sulfurihydrogenibium sp. (strain YO3AOP1)).